A 231-amino-acid polypeptide reads, in one-letter code: Biosynthetic peptidoglycan transglycosylase (231 aa).

A helical membrane pass occupies residues 7 to 27; sequence LLFWLILVPILLVLLMQLYFF.

The protein belongs to the glycosyltransferase 51 family.

It is found in the cell inner membrane. It catalyses the reaction [GlcNAc-(1-&gt;4)-Mur2Ac(oyl-L-Ala-gamma-D-Glu-L-Lys-D-Ala-D-Ala)](n)-di-trans,octa-cis-undecaprenyl diphosphate + beta-D-GlcNAc-(1-&gt;4)-Mur2Ac(oyl-L-Ala-gamma-D-Glu-L-Lys-D-Ala-D-Ala)-di-trans,octa-cis-undecaprenyl diphosphate = [GlcNAc-(1-&gt;4)-Mur2Ac(oyl-L-Ala-gamma-D-Glu-L-Lys-D-Ala-D-Ala)](n+1)-di-trans,octa-cis-undecaprenyl diphosphate + di-trans,octa-cis-undecaprenyl diphosphate + H(+). It participates in cell wall biogenesis; peptidoglycan biosynthesis. Functionally, peptidoglycan polymerase that catalyzes glycan chain elongation from lipid-linked precursors. In Herminiimonas arsenicoxydans, this protein is Biosynthetic peptidoglycan transglycosylase.